The chain runs to 466 residues: 3-isopropylmalate dehydratase large subunit (466 aa).

Positions 347, 407, and 410 each coordinate [4Fe-4S] cluster.

This sequence belongs to the aconitase/IPM isomerase family. LeuC type 1 subfamily. In terms of assembly, heterodimer of LeuC and LeuD. It depends on [4Fe-4S] cluster as a cofactor.

The catalysed reaction is (2R,3S)-3-isopropylmalate = (2S)-2-isopropylmalate. It functions in the pathway amino-acid biosynthesis; L-leucine biosynthesis; L-leucine from 3-methyl-2-oxobutanoate: step 2/4. Catalyzes the isomerization between 2-isopropylmalate and 3-isopropylmalate, via the formation of 2-isopropylmaleate. In Vibrio campbellii (strain ATCC BAA-1116), this protein is 3-isopropylmalate dehydratase large subunit.